The primary structure comprises 62 residues: U8-theraphotoxin-Cg1a 2 (62 aa).

The N-terminal stretch at 1-21 (MKTLVLFIIFGLAALFLLSSA) is a signal peptide. Positions 22 to 29 (TELEETER) are excised as a propeptide. Cystine bridges form between C31/C46, C38/C51, and C45/C58.

The protein belongs to the neurotoxin 10 (Hwtx-1) family. 30 (Jztx-14) subfamily. In terms of tissue distribution, expressed by the venom gland.

Its subcellular location is the secreted. Functionally, probable ion channel inhibitor. The chain is U8-theraphotoxin-Cg1a 2 from Chilobrachys guangxiensis (Chinese earth tiger tarantula).